The primary structure comprises 349 residues: Biotin synthase (349 aa).

Residues 70-295 (PEVEVEGIIS…RTMLRFAGGR (226 aa)) enclose the Radical SAM core domain. The [4Fe-4S] cluster site is built by Cys-85, Cys-89, and Cys-92. [2Fe-2S] cluster is bound by residues Cys-128, Cys-161, Cys-220, and Arg-290.

This sequence belongs to the radical SAM superfamily. Biotin synthase family. Homodimer. [4Fe-4S] cluster is required as a cofactor. It depends on [2Fe-2S] cluster as a cofactor.

It carries out the reaction (4R,5S)-dethiobiotin + (sulfur carrier)-SH + 2 reduced [2Fe-2S]-[ferredoxin] + 2 S-adenosyl-L-methionine = (sulfur carrier)-H + biotin + 2 5'-deoxyadenosine + 2 L-methionine + 2 oxidized [2Fe-2S]-[ferredoxin]. The protein operates within cofactor biosynthesis; biotin biosynthesis; biotin from 7,8-diaminononanoate: step 2/2. Functionally, catalyzes the conversion of dethiobiotin (DTB) to biotin by the insertion of a sulfur atom into dethiobiotin via a radical-based mechanism. The polypeptide is Biotin synthase (Mycobacterium bovis (strain ATCC BAA-935 / AF2122/97)).